Here is a 434-residue protein sequence, read N- to C-terminus: MRMVLIDGEHYPDVTAWAIKKIGDVSCAVFLGGTEKIGDMKSLEEKIGVKLYYGESYISNIKKAINENKIGEVIDLSDEPVLNYEDRFRIAAVLLKHGIKYKGADFEFSPKEMVQINKPSLTILGTGKRVGKTAISGFVARTLKEISKPIIVTMGRGGPEEPEIIEGNKLEITPDFLVRVAESGKHAASDHFEDALTSRVITIGCRRCGGGMVGFSFFDIVNKGIKLAEKLEGDIVILEGSGATFPAVKADKYITVVGATQRIEFIKSYFGPFRIGLADLIVITLADMVSKEKIEKIQKIIESINPDAEIHLTAFKPRPLSEIKGKKAILVMTAPPEGLEKAARHLENRYDVEIVGKSANLANRPKLIEDLSRFKYYDTVLVELKAAAVDVATKEALKYGKEVIYIDNEPVNIDNKNLREAVLEIGWELKGERK.

Belongs to the cyclic 2,3-diphosphoglycerate synthetase family.

Its subcellular location is the cytoplasm. It catalyses the reaction (2R)-2,3-bisphosphoglycerate + ATP + H(+) = cyclic (2R)-2,3-bisphosphoglycerate + ADP + phosphate. Functionally, catalyzes the formation of cyclic 2,3-diphosphoglycerate (cDPG) by formation of an intramolecular phosphoanhydride bond at the expense of ATP. In Thermococcus sibiricus (strain DSM 12597 / MM 739), this protein is Cyclic 2,3-diphosphoglycerate synthetase.